The primary structure comprises 372 residues: L-selectin (372 aa).

A signal peptide spans 1 to 28 (MIFPWKCQSTQRDLWNIFKLWGWTMLCC). A propeptide spanning residues 29-38 (DFLAHHGTDC) is cleaved from the precursor. At 39–332 (WTYHYSEKPM…FSMIKEGDYN (294 aa)) the chain is on the extracellular side. The C-type lectin domain occupies 55–155 (RFCRDNYTDL…ACHKLKAALC (101 aa)). 10 cysteine pairs are disulfide-bonded: Cys57-Cys155, Cys128-Cys147, Cys128-Cys160, Cys160-Cys171, Cys165-Cys180, Cys182-Cys191, Cys197-Cys241, Cys227-Cys254, Cys259-Cys303, and Cys289-Cys316. Asn60 and Asn104 each carry an N-linked (GlcNAc...) asparagine glycan. The Ca(2+) site is built by Glu118, Asn120, Glu126, Asn143, and Asp144. Positions 156-192 (YTASCQPWSCSGHGECVEIINNYTCNCDVGYYGPQCQ) constitute an EGF-like domain. The N-linked (GlcNAc...) asparagine glycan is linked to Asn177. 2 consecutive Sushi domains span residues 195 to 256 (IQCE…TCQV) and 257 to 318 (IQCE…ICQK). 4 N-linked (GlcNAc...) asparagine glycosylation sites follow: Asn216, Asn232, Asn246, and Asn271. A helical transmembrane segment spans residues 333–355 (PLFIPVAVMVTAFSGLAFIIWLA). Residues 356–372 (RRLKKGKKSKRSMDDPY) lie on the Cytoplasmic side of the membrane.

It belongs to the selectin/LECAM family. In terms of assembly, interaction with SELPLG/PSGL1 and PODXL2 is required for promoting recruitment and rolling of leukocytes. This interaction is dependent on the sialyl Lewis X glycan modification of SELPLG and PODXL2, and tyrosine sulfation modifications of SELPLG. Sulfation on 'Tyr-51' of SELPLG is important for L-selectin binding. In terms of processing, N-glycosylated.

It localises to the cell membrane. Functionally, calcium-dependent lectin that mediates cell adhesion by binding to glycoproteins on neighboring cells. Mediates the adherence of lymphocytes to endothelial cells of high endothelial venules in peripheral lymph nodes. Promotes initial tethering and rolling of leukocytes in endothelia. In Pan troglodytes (Chimpanzee), this protein is L-selectin (SELL).